The chain runs to 521 residues: Maturase K (521 aa).

The protein belongs to the intron maturase 2 family. MatK subfamily.

The protein localises to the plastid. Its subcellular location is the chloroplast. Functionally, usually encoded in the trnK tRNA gene intron. Probably assists in splicing its own and other chloroplast group II introns. The chain is Maturase K from Anthericum liliago (St-Bernard's lily).